The chain runs to 151 residues: uncharacterized protein (151 aa).

Positions 48 to 151 (RPPGWQPPVN…SKFDHTRKKF (104 aa)) are disordered. A compositionally biased stretch (polar residues) spans 55–77 (PVNTGPTSPVSINASNAAPSNLK). Composition is skewed to low complexity over residues 85–105 (PRRL…RLPS) and 123–141 (KSPS…SLLR).

This is an uncharacterized protein from Schizosaccharomyces pombe (strain 972 / ATCC 24843) (Fission yeast).